A 615-amino-acid chain; its full sequence is MFS-type transporter 1 (615 aa).

Residues 1-85 (MTALAAVPDL…GNNVSPHGRH (85 aa)) form a disordered region. A compositionally biased stretch (polar residues) spans 16–53 (PSTTTVHSPNYSGSPADISSSPTTRAVSRNTARQTASA). An N-linked (GlcNAc...) asparagine glycan is attached at Asn25. 6 consecutive transmembrane segments (helical) span residues 94–114 (CLVIATLSGVSFLNTMGSGIL), 138–158 (VYSLAAGCTLLVFGAVGHIIG), 162–182 (VWITGACLYAAFTLGVGRSAT), 192–212 (VLGVSIAMCLPTAVSLTTNGF), 222–242 (FAFQGMGQPLGYSTGLILGGI), and 251–271 (FGFYISGGINAVLAICALVVL). N-linked (GlcNAc...) asparagine glycosylation occurs at Asn302. Transmembrane regions (helical) follow at residues 320–340 (WTGTLAISASMGFLSYVFSVV), 351–371 (QNIALLVAAALLLPTFTLWVG), 397–417 (AAVFFTWAVFNAFQYFSALYF), 432–452 (FLPMVLVGAATNIVTGYLVET), 455–475 (VRWLVVVSAIFSLFSPLIMAL), 488–508 (FAMLLSPLHPDVLFTVSNLII), 522–542 (AVFNAVSQVGNSVGLGLTAVV), and 585–605 (AAFWLMFGAAALVTVITFLGL).

This sequence belongs to the major facilitator superfamily. EmrB family.

It localises to the membrane. Functionally, MFS-type transporter; part of the gene cluster that mediates the biosynthesis of pyriculol and pyriculariol, two heptaketides that induce lesion formation upon application on rice leaves but are dispensable for pathogenicity. With the ABC transporter ABC7, is most likely responsible for pyriculol and pyriculariol secretion and thereby may contribute to intrinsic resistance. The sequence is that of MFS-type transporter 1 from Pyricularia oryzae (strain 70-15 / ATCC MYA-4617 / FGSC 8958) (Rice blast fungus).